A 101-amino-acid chain; its full sequence is Small ribosomal subunit protein uS14 (101 aa).

The span at 1-10 (MAKKSSIEKN) shows a compositional bias: basic and acidic residues. The tract at residues 1–23 (MAKKSSIEKNNRRKKMTKNAAPK) is disordered. A compositionally biased stretch (basic residues) spans 11 to 23 (NRRKKMTKNAAPK).

Belongs to the universal ribosomal protein uS14 family. Part of the 30S ribosomal subunit. Contacts proteins S3 and S10.

In terms of biological role, binds 16S rRNA, required for the assembly of 30S particles and may also be responsible for determining the conformation of the 16S rRNA at the A site. The protein is Small ribosomal subunit protein uS14 of Rhodopseudomonas palustris (strain HaA2).